The sequence spans 333 residues: MHIAVLGAGSWGTTLAVLLARKGHAVKLWAHRPEFARTLQAERENTRYLKGTLFPDSLEVVGDLDGCIAEAEMIVTAVPSQALRETARAFSSLPFQGKIIVNVAKGIEVGSGMRMTEVLMDELPGLQPGRVAALYGPSHAEEVAREQPTTVVASSPSMETAEAVQEVFHTSRFRVYVNTDIVGVEVAGSVKNIIAIAAGISDGIGFGDNAKAAIITRGMAEISRLALKLGGDPMTISGLSGIGDLVVTCLSRHSRNRFVGEELGRGRSLDDIITHMNMIAEGVLSSKAVYALSSSLGVEMPITQAVYEMLFEAKPVEQAILDLMTREPKPERD.

Residues S10, W11, H31, R32, and K105 each contribute to the NADPH site. Sn-glycerol 3-phosphate is bound by residues K105, G136, and S138. An NADPH-binding site is contributed by A140. Sn-glycerol 3-phosphate contacts are provided by K191, D244, S254, R255, and N256. K191 functions as the Proton acceptor in the catalytic mechanism. R255 serves as a coordination point for NADPH. Residues I279 and E281 each contribute to the NADPH site.

It belongs to the NAD-dependent glycerol-3-phosphate dehydrogenase family.

Its subcellular location is the cytoplasm. The catalysed reaction is sn-glycerol 3-phosphate + NAD(+) = dihydroxyacetone phosphate + NADH + H(+). It carries out the reaction sn-glycerol 3-phosphate + NADP(+) = dihydroxyacetone phosphate + NADPH + H(+). It participates in membrane lipid metabolism; glycerophospholipid metabolism. Its function is as follows. Catalyzes the reduction of the glycolytic intermediate dihydroxyacetone phosphate (DHAP) to sn-glycerol 3-phosphate (G3P), the key precursor for phospholipid synthesis. The chain is Glycerol-3-phosphate dehydrogenase [NAD(P)+] from Chlorobium luteolum (strain DSM 273 / BCRC 81028 / 2530) (Pelodictyon luteolum).